The primary structure comprises 230 residues: Ion-translocating oxidoreductase complex subunit E (230 aa).

The next 6 membrane-spanning stretches (helical) occupy residues 18 to 38, 39 to 59, 63 to 83, 86 to 106, 125 to 145, and 182 to 202; these read ALVQ…ATNA, LGLG…VSAL, TPAE…VSAV, LINA…PLIV, WLSA…MFVL, and PFLL…MLAV.

It belongs to the NqrDE/RnfAE family. The complex is composed of six subunits: RsxA, RsxB, RsxC, RsxD, RsxE and RsxG.

It localises to the cell inner membrane. Part of a membrane-bound complex that couples electron transfer with translocation of ions across the membrane. Required to maintain the reduced state of SoxR. This Salmonella arizonae (strain ATCC BAA-731 / CDC346-86 / RSK2980) protein is Ion-translocating oxidoreductase complex subunit E.